Reading from the N-terminus, the 477-residue chain is Prolyl tri/tetrapeptidyl aminopeptidase (477 aa).

An N-terminal signal peptide occupies residues 1 to 27 (MRKALRSLLAASMLIGAIGAGSATAEA). The propeptide occupies 28–33 (ASITAP). The interval 448–477 (QKDEKAAKPLAPFDAKLDRVKNDKQSALRP) is disordered. The segment covering 462–477 (AKLDRVKNDKQSALRP) has biased composition (basic and acidic residues).

The protein belongs to the peptidase S37 family.

It localises to the secreted. It is found in the cell surface. Completely inhibited by the serine protease inhibitor phenylmethylsulfonyl fluoride. Partially inhibited by the serine protease inhibitor Pefabloc. Not inhibited by cysteine proteinase-specific or metalloproteinase-specific inhibitors. Not inhibited by prolinal or its derivatives. EDTA and EGTA both partially inhibit this enzyme. EDTA has no effect on activity. Its function is as follows. Has proline-specific tripeptidyl aminopeptidase and tetrapeptidyl aminopeptidase activity. Activity is highest against tripeptides containing an Ala-Pro motif. Involved in the final processing of transglutaminase, by removing either the tetrapeptide Phe-Arg-Ala-Pro left after TAMEP or SAM-P45 hydrolysis, or the tripeptide Arg-Ala-Pro left after SGMP II hydrolysis in a single step. This is Prolyl tri/tetrapeptidyl aminopeptidase (ptp) from Streptomyces mobaraensis (Streptoverticillium mobaraense).